We begin with the raw amino-acid sequence, 94 residues long: DNA-directed RNA polymerase subunit omega (94 aa).

The protein belongs to the RNA polymerase subunit omega family. In terms of assembly, the RNAP catalytic core consists of 2 alpha, 1 beta, 1 beta' and 1 omega subunit. When a sigma factor is associated with the core the holoenzyme is formed, which can initiate transcription.

It carries out the reaction RNA(n) + a ribonucleoside 5'-triphosphate = RNA(n+1) + diphosphate. In terms of biological role, promotes RNA polymerase assembly. Latches the N- and C-terminal regions of the beta' subunit thereby facilitating its interaction with the beta and alpha subunits. The sequence is that of DNA-directed RNA polymerase subunit omega from Frankia casuarinae (strain DSM 45818 / CECT 9043 / HFP020203 / CcI3).